A 197-amino-acid chain; its full sequence is Segregation and condensation protein B (197 aa).

Belongs to the ScpB family. As to quaternary structure, homodimer. Homodimerization may be required to stabilize the binding of ScpA to the Smc head domains. Component of a cohesin-like complex composed of ScpA, ScpB and the Smc homodimer, in which ScpA and ScpB bind to the head domain of Smc. The presence of the three proteins is required for the association of the complex with DNA.

It localises to the cytoplasm. In terms of biological role, participates in chromosomal partition during cell division. May act via the formation of a condensin-like complex containing Smc and ScpA that pull DNA away from mid-cell into both cell halves. The protein is Segregation and condensation protein B of Bacillus licheniformis (strain ATCC 14580 / DSM 13 / JCM 2505 / CCUG 7422 / NBRC 12200 / NCIMB 9375 / NCTC 10341 / NRRL NRS-1264 / Gibson 46).